Reading from the N-terminus, the 37-residue chain is Large ribosomal subunit protein bL36 (37 aa).

This sequence belongs to the bacterial ribosomal protein bL36 family.

The chain is Large ribosomal subunit protein bL36 from Parasynechococcus marenigrum (strain WH8102).